The following is a 906-amino-acid chain: Translation initiation factor IF-2 (906 aa).

Disordered stretches follow at residues 94–125, 165–232, and 270–321; these read APEKTEVIPEETENTVEESTAAETVESEPETA, ESEA…TGKK, and RQEQ…SSEV. 3 stretches are compositionally biased toward basic and acidic residues: residues 165–176, 222–232, and 270–284; these read ESEAEKGTEIEK, GPAEARETGKK, and RQEQKRREEAKKREA. Basic residues predominate over residues 299–313; the sequence is QQRRSLKRGGKRKKY. In terms of domain architecture, tr-type G spans 405-574; it reads ERPPVITIMG…LLQAEMMELK (170 aa). The interval 414 to 421 is G1; sequence GHVDHGKT. Position 414 to 421 (414 to 421) interacts with GTP; that stretch reads GHVDHGKT. Residues 439-443 form a G2 region; it reads GITQH. The segment at 460-463 is G3; sequence DTPG. GTP contacts are provided by residues 460-464 and 514-517; these read DTPGH and NKMD. The interval 514–517 is G4; it reads NKMD. Positions 550 to 552 are G5; that stretch reads SAH.

The protein belongs to the TRAFAC class translation factor GTPase superfamily. Classic translation factor GTPase family. IF-2 subfamily.

It is found in the cytoplasm. One of the essential components for the initiation of protein synthesis. Protects formylmethionyl-tRNA from spontaneous hydrolysis and promotes its binding to the 30S ribosomal subunits. Also involved in the hydrolysis of GTP during the formation of the 70S ribosomal complex. The polypeptide is Translation initiation factor IF-2 (Sulfurovum sp. (strain NBC37-1)).